The primary structure comprises 402 residues: Tyrosine--tRNA ligase (402 aa).

A 'HIGH' region motif is present at residues 47-56; sequence PTAPDLHLGH. A 'KMSKS' region motif is present at residues 232-236; sequence KMSKS. Residue K235 coordinates ATP. The S4 RNA-binding domain maps to 341-401; the sequence is VGVLDVLKQI…GKKRFMKLNI (61 aa).

This sequence belongs to the class-I aminoacyl-tRNA synthetase family. TyrS type 2 subfamily. As to quaternary structure, homodimer.

The protein resides in the cytoplasm. The enzyme catalyses tRNA(Tyr) + L-tyrosine + ATP = L-tyrosyl-tRNA(Tyr) + AMP + diphosphate + H(+). Catalyzes the attachment of tyrosine to tRNA(Tyr) in a two-step reaction: tyrosine is first activated by ATP to form Tyr-AMP and then transferred to the acceptor end of tRNA(Tyr). This is Tyrosine--tRNA ligase from Helicobacter pylori (strain J99 / ATCC 700824) (Campylobacter pylori J99).